The following is a 244-amino-acid chain: MGQPVASRGRAATPTIGKAMLNKYARAFFTRVLTPFAAFLIRRGVSPDTVTLLGTAGVIAGALVFYPRGEFFWGTIVITLFVFSDLVDGNMARQLGRTSRWGAFLDSTLDRVADGAIFGGFALWYAGGGDNNVLCAVSIFCLASGQVVSYTKARGESIGLPVAVNGLVERAERLVISLVAAGFAGLHKFGVPGIQVLLPIALWIVAVGSLVTLIQRVVTVRRESAEADAATAAENASQGSGAAS.

The next 3 helical transmembrane spans lie at 24-42 (YARA…FLIR), 49-66 (TVTL…LVFY), and 72-91 (FWGT…DGNM). A CDP-1,2-diacyl-sn-glycerol is bound at residue 48-51 (DTVT). Aspartate 85 and aspartate 88 together coordinate Mg(2+). A CDP-1,2-diacyl-sn-glycerol-binding residues include glycine 89, arginine 93, and serine 99. Positions 106 and 110 each coordinate Mg(2+). Aspartate 110 functions as the Proton acceptor in the catalytic mechanism. The next 3 helical transmembrane spans lie at 117–137 (IFGG…LCAV), 174–190 (LVIS…HKFG), and 196–214 (VLLP…VTLI).

Belongs to the CDP-alcohol phosphatidyltransferase class-I family. In terms of assembly, homodimer. Requires Mg(2+) as cofactor.

The protein localises to the cell membrane. It carries out the reaction a CDP-1,2-diacyl-sn-glycerol + 1D-myo-inositol 3-phosphate = a 1,2-diacyl-sn-glycero-3-phospho-(1D-myo-inositol-3-phosphate) + CMP + H(+). It catalyses the reaction 1,2-di-(9Z-octadecenoyl)-sn-glycero-3-cytidine-5'-diphosphate + 1D-myo-inositol 3-phosphate = 1,2-di-(9Z-octadecenoyl)-sn-glycero-3-phospho-(1D-myo-inositol-3-phosphate) + CMP + H(+). Its pathway is phospholipid metabolism; phosphatidylinositol phosphate biosynthesis. Catalyzes the conjugation of the 1'-hydroxyl group of D-myo-inositol-3-phosphate (also named L-myo-inositol-1-phosphate) with a lipid tail of cytidine diphosphate diacylglycerol (CDP-DAG), forming phosphatidylinositol phosphate (PIP) and CMP. PIP is a precursor of phosphatidylinositol (PI) which is an essential lipid required for cell wall formation. The polypeptide is Phosphatidylinositol phosphate synthase (Streptomyces avermitilis (strain ATCC 31267 / DSM 46492 / JCM 5070 / NBRC 14893 / NCIMB 12804 / NRRL 8165 / MA-4680)).